Here is a 404-residue protein sequence, read N- to C-terminus: Cysteine desulfurase IscS (404 aa).

Pyridoxal 5'-phosphate contacts are provided by residues 75–76 (AT), asparagine 155, glutamine 183, and 203–205 (SGH). Position 206 is an N6-(pyridoxal phosphate)lysine (lysine 206). Threonine 243 provides a ligand contact to pyridoxal 5'-phosphate. The active-site Cysteine persulfide intermediate is cysteine 328. Cysteine 328 contacts [2Fe-2S] cluster.

Belongs to the class-V pyridoxal-phosphate-dependent aminotransferase family. NifS/IscS subfamily. As to quaternary structure, homodimer. Forms a heterotetramer with IscU, interacts with other sulfur acceptors. Pyridoxal 5'-phosphate serves as cofactor.

It localises to the cytoplasm. The catalysed reaction is (sulfur carrier)-H + L-cysteine = (sulfur carrier)-SH + L-alanine. Its pathway is cofactor biosynthesis; iron-sulfur cluster biosynthesis. Functionally, master enzyme that delivers sulfur to a number of partners involved in Fe-S cluster assembly, tRNA modification or cofactor biosynthesis. Catalyzes the removal of elemental sulfur and selenium atoms from cysteine and selenocysteine to produce alanine. Functions as a sulfur delivery protein for Fe-S cluster synthesis onto IscU, an Fe-S scaffold assembly protein, as well as other S acceptor proteins. Also functions as a selenium delivery protein in the pathway for the biosynthesis of selenophosphate. This Salmonella typhi protein is Cysteine desulfurase IscS.